Reading from the N-terminus, the 294-residue chain is Indole-3-glycerol phosphate synthase (294 aa).

The protein belongs to the TrpC family.

The catalysed reaction is 1-(2-carboxyphenylamino)-1-deoxy-D-ribulose 5-phosphate + H(+) = (1S,2R)-1-C-(indol-3-yl)glycerol 3-phosphate + CO2 + H2O. It functions in the pathway amino-acid biosynthesis; L-tryptophan biosynthesis; L-tryptophan from chorismate: step 4/5. The sequence is that of Indole-3-glycerol phosphate synthase from Synechococcus sp. (strain WH7803).